Here is a 287-residue protein sequence, read N- to C-terminus: Immunoglobulin alpha Fc receptor (287 aa).

Positions 1–21 (MDPKQTTLLCLVLCLGQRIQA) are cleaved as a signal peptide. The Extracellular segment spans residues 22–227 (QEGDFPMPFI…SIHQDYTTQN (206 aa)). Ig-like C2-type domains are found at residues 42 to 107 (DGSV…IGHY) and 139 to 200 (GENI…YNRS). Residues cysteine 49 and cysteine 100 are joined by a disulfide bond. N-linked (GlcNAc...) asparagine glycans are attached at residues asparagine 65, asparagine 79, asparagine 141, asparagine 177, and asparagine 186. A disulfide bridge links cysteine 146 with cysteine 193. A helical membrane pass occupies residues 228-246 (LIRMAVAGLVLVALLAILV). At 247–287 (ENWHSHTALNKEASADVAEPSWSQQMCQPGLTFARTPSVCK) the chain is on the cytoplasmic side.

Associates with the Fc epsilon RI gamma 2 receptor inducing tyrosine phosphorylation of gamma 2. As to quaternary structure, (Microbial infection) Interacts with Staphylococcus aureus protein SSL11. Isoform A.1, isoform A.2 and isoform A.3 are differentially expressed between blood and mucosal myeloid cells. Isoform A.1, isoform A.2 and isoform A.3 are expressed in monocytes. Isoform A.1 and isoform A.2 are expressed in alveolar macrophages; however only one isoform is expressed at alveolar macrophages surfaces.

Its subcellular location is the cell membrane. The protein localises to the secreted. In terms of biological role, binds to the Fc region of immunoglobulins alpha. Mediates several functions including cytokine production. The chain is Immunoglobulin alpha Fc receptor (FCAR) from Homo sapiens (Human).